Reading from the N-terminus, the 71-residue chain is MKTGIHPDYQDMKATCSCGNVIVVRSTLKKDLNLDVCSACHPFYTGKQRNVDTGGRVDKFNKRFSALSTKK.

Residues Cys-16, Cys-18, Cys-37, and Cys-40 each coordinate Zn(2+).

Belongs to the bacterial ribosomal protein bL31 family. Type A subfamily. Part of the 50S ribosomal subunit. Requires Zn(2+) as cofactor.

In terms of biological role, binds the 23S rRNA. In Pseudoalteromonas atlantica (strain T6c / ATCC BAA-1087), this protein is Large ribosomal subunit protein bL31.